The sequence spans 157 residues: MNINFTLISQAIAFSLFILFTARFVWPYLLRAIEERQQKIADGLAAGERGKKELELASQRSSEVLKEAKQRASEIVIQAEKRASDIIEEAKQNARIEGEKIIAGAKAEIQHETFSARESLRQQVAGLAVQGASKILRREVNAKVHADLLASIEAELK.

The chain crosses the membrane as a helical span at residues 7–29 (LISQAIAFSLFILFTARFVWPYL).

Belongs to the ATPase B chain family. F-type ATPases have 2 components, F(1) - the catalytic core - and F(0) - the membrane proton channel. F(1) has five subunits: alpha(3), beta(3), gamma(1), delta(1), epsilon(1). F(0) has three main subunits: a(1), b(2) and c(10-14). The alpha and beta chains form an alternating ring which encloses part of the gamma chain. F(1) is attached to F(0) by a central stalk formed by the gamma and epsilon chains, while a peripheral stalk is formed by the delta and b chains.

The protein localises to the cell inner membrane. F(1)F(0) ATP synthase produces ATP from ADP in the presence of a proton or sodium gradient. F-type ATPases consist of two structural domains, F(1) containing the extramembraneous catalytic core and F(0) containing the membrane proton channel, linked together by a central stalk and a peripheral stalk. During catalysis, ATP synthesis in the catalytic domain of F(1) is coupled via a rotary mechanism of the central stalk subunits to proton translocation. Functionally, component of the F(0) channel, it forms part of the peripheral stalk, linking F(1) to F(0). In Nitrosomonas europaea (strain ATCC 19718 / CIP 103999 / KCTC 2705 / NBRC 14298), this protein is ATP synthase subunit b.